Here is a 440-residue protein sequence, read N- to C-terminus: Tyrosine--tRNA ligase (440 aa).

Y46 is a binding site for L-tyrosine. A 'HIGH' region motif is present at residues 51-60 (PTAPSLHIGN). L-tyrosine is bound by residues Y181 and Q185. The short motif at 241–245 (KFGKS) is the 'KMSKS' region element. Residue K244 coordinates ATP. In terms of domain architecture, S4 RNA-binding spans 373–430 (DRIAQAGVSAGLFKSISEARKTIKSGGVYVNNVRVEDEEQLLGDGDFLKGRFVVLRRG).

This sequence belongs to the class-I aminoacyl-tRNA synthetase family. TyrS type 1 subfamily. In terms of assembly, homodimer.

Its subcellular location is the cytoplasm. It catalyses the reaction tRNA(Tyr) + L-tyrosine + ATP = L-tyrosyl-tRNA(Tyr) + AMP + diphosphate + H(+). In terms of biological role, catalyzes the attachment of tyrosine to tRNA(Tyr) in a two-step reaction: tyrosine is first activated by ATP to form Tyr-AMP and then transferred to the acceptor end of tRNA(Tyr). This is Tyrosine--tRNA ligase from Bifidobacterium animalis subsp. lactis (strain AD011).